The sequence spans 371 residues: Cytochrome b (371 aa).

A run of 4 helical transmembrane segments spans residues 25 to 45, 69 to 90, 105 to 125, and 170 to 190; these read FGSMLLTCLGLQVLTGFFLAV, WMMQNLHAIGASMFFICIYIHI, WMSGITLLITLMATAFFGYVL, and FFALHFILPFAIISLSSLHII. Residues His75 and His89 each contribute to the heme b site. Positions 174 and 188 each coordinate heme b. His193 serves as a coordination point for a ubiquinone. 4 helical membrane-spanning segments follow: residues 218-238, 280-300, 312-332, and 339-358; these read HKDLLLLTLMIMSLFIISSFF, LGGALALVMSIMILFIIPFTH, LSQLMFWTLVSTFITITWAAT, and FIVISQVTSSLYFTFFLSTP.

It belongs to the cytochrome b family. The cytochrome bc1 complex contains 3 respiratory subunits (MT-CYB, CYC1 and UQCRFS1), 2 core proteins (UQCRC1 and UQCRC2) and probably 6 low-molecular weight proteins. It depends on heme b as a cofactor.

Its subcellular location is the mitochondrion inner membrane. Its function is as follows. Component of the ubiquinol-cytochrome c reductase complex (complex III or cytochrome b-c1 complex) that is part of the mitochondrial respiratory chain. The b-c1 complex mediates electron transfer from ubiquinol to cytochrome c. Contributes to the generation of a proton gradient across the mitochondrial membrane that is then used for ATP synthesis. The protein is Cytochrome b (MT-CYB) of Aspidites melanocephalus (Black-headed python).